A 527-amino-acid polypeptide reads, in one-letter code: Peptide chain release factor 3 (527 aa).

The tr-type G domain maps to 10 to 278 (DRRRTFAIIS…TFVENAPAPL (269 aa)). GTP is bound by residues 19–26 (SHPDAGKT), 87–91 (DTPGH), and 141–144 (NKLD).

It belongs to the TRAFAC class translation factor GTPase superfamily. Classic translation factor GTPase family. PrfC subfamily.

The protein localises to the cytoplasm. Increases the formation of ribosomal termination complexes and stimulates activities of RF-1 and RF-2. It binds guanine nucleotides and has strong preference for UGA stop codons. It may interact directly with the ribosome. The stimulation of RF-1 and RF-2 is significantly reduced by GTP and GDP, but not by GMP. This is Peptide chain release factor 3 from Geobacter metallireducens (strain ATCC 53774 / DSM 7210 / GS-15).